A 109-amino-acid chain; its full sequence is Staphostatin B (109 aa).

Residues 97–101 are binds to staphopain B; that stretch reads IGTSR.

It belongs to the protease inhibitor I57 (SspC) family. Forms a stable non-covalent complex with prematurely activated/folded SspB.

It is found in the cytoplasm. Its function is as follows. Specifically inhibits the cysteine protease staphopain B (SspB) by blocking the active site of the enzyme. Probably required to protect cytoplasmic proteins from being degraded by prematurely activated/folded prostaphopain B. Also involved in growth capacity, viability and bacterial morphology. This chain is Staphostatin B (sspC), found in Staphylococcus aureus (strain MRSA252).